The following is a 406-amino-acid chain: 5-methylthioadenosine/S-adenosylhomocysteine deaminase (406 aa).

The Zn(2+) site is built by H55 and H57. Residues E84, R136, R148, and H173 each coordinate substrate. H200 provides a ligand contact to Zn(2+). E203 and D279 together coordinate substrate. D279 is a binding site for Zn(2+).

It belongs to the metallo-dependent hydrolases superfamily. MTA/SAH deaminase family. The cofactor is Zn(2+).

The catalysed reaction is S-adenosyl-L-homocysteine + H2O + H(+) = S-inosyl-L-homocysteine + NH4(+). The enzyme catalyses S-methyl-5'-thioadenosine + H2O + H(+) = S-methyl-5'-thioinosine + NH4(+). Its function is as follows. Catalyzes the deamination of 5-methylthioadenosine and S-adenosyl-L-homocysteine into 5-methylthioinosine and S-inosyl-L-homocysteine, respectively. Is also able to deaminate adenosine. Adenosine-5-monophosphate (AMP) and S-adenosyl-L-methionine (SAM) are not enzyme substrates. This is 5-methylthioadenosine/S-adenosylhomocysteine deaminase (mtaD) from Thermotoga maritima (strain ATCC 43589 / DSM 3109 / JCM 10099 / NBRC 100826 / MSB8).